A 299-amino-acid polypeptide reads, in one-letter code: HTH-type transcriptional regulator ArgP (299 aa).

In terms of domain architecture, HTH lysR-type spans 4-60 (PDYRALQALDAVIRERGFERAAQKLCITQSAVSQRIKQLENLFGQPLLVRTVPPQPT). A DNA-binding region (H-T-H motif) is located at residues 21–40 (FERAAQKLCITQSAVSQRIK).

This sequence belongs to the LysR transcriptional regulatory family. In terms of assembly, homodimer.

In terms of biological role, controls the transcription of genes involved in arginine and lysine metabolism. This is HTH-type transcriptional regulator ArgP from Proteus mirabilis (strain HI4320).